The primary structure comprises 175 residues: Adenine phosphoribosyltransferase (175 aa).

This sequence belongs to the purine/pyrimidine phosphoribosyltransferase family. Homodimer.

It is found in the cytoplasm. It carries out the reaction AMP + diphosphate = 5-phospho-alpha-D-ribose 1-diphosphate + adenine. Its pathway is purine metabolism; AMP biosynthesis via salvage pathway; AMP from adenine: step 1/1. Catalyzes a salvage reaction resulting in the formation of AMP, that is energically less costly than de novo synthesis. The chain is Adenine phosphoribosyltransferase from Lactobacillus johnsonii (strain CNCM I-12250 / La1 / NCC 533).